A 171-amino-acid chain; its full sequence is Laminin subunit beta-1 (171 aa).

A signal peptide spans 1-29 (MNGRTQNLWFSTFRLVIVYALFFAKLCFG). 5 disulfides stabilise this stretch: cysteine 59–cysteine 69, cysteine 72–cysteine 81, cysteine 84–cysteine 100, cysteine 103–cysteine 118, and cysteine 105–cysteine 128. Laminin EGF-like domains lie at 66 to 102 (TGVC…VCQR), 103 to 160 (CQCP…TCKK), and 161 to 171 (CLCNGNINSAS). Residue asparagine 130 is glycosylated (N-linked (GlcNAc...) asparagine). 2 disulfide bridges follow: cysteine 131/cysteine 140 and cysteine 143/cysteine 158.

As to quaternary structure, laminin is a complex glycoprotein, consisting of three different polypeptide chains (alpha, beta, gamma), which are bound to each other by disulfide bonds into a cross-shaped molecule comprising one long and three short arms with globules at each end.

Its subcellular location is the secreted. It localises to the extracellular space. The protein resides in the extracellular matrix. The protein localises to the basement membrane. In terms of biological role, binding to cells via a high affinity receptor, laminin is thought to mediate the attachment, migration and organization of cells into tissues during embryonic development by interacting with other extracellular matrix components. The sequence is that of Laminin subunit beta-1 from Hydra vulgaris (Hydra).